The sequence spans 141 residues: Cystatin (141 aa).

The signal sequence occupies residues methionine 1–methionine 26. The region spanning glycine 29–tryptophan 129 is the Cystatin domain. Positions glutamine 73–glycine 77 match the Secondary area of contact motif. Intrachain disulfides connect cysteine 91-cysteine 107 and cysteine 120-cysteine 140.

This sequence belongs to the cystatin family. Expressed at a low level by the venom gland (at protein level).

The protein localises to the secreted. Functionally, inhibits various C1 cysteine proteases including cathepsin L, papain and cathepsin B. This protein has no toxic activity and its function in the venom is unknown. It may play a role as a housekeeping or regulatory protein. The polypeptide is Cystatin (Pseudechis australis (Mulga snake)).